The following is a 292-amino-acid chain: 11-beta-hydroxysteroid dehydrogenase 1 (292 aa).

The Cytoplasmic portion of the chain corresponds to A2–Y7. Residues L8–N24 form a helical; Signal-anchor for type II membrane protein membrane-spanning segment. The Lumenal portion of the chain corresponds to E25–N292. NADP(+)-binding positions include G41–S67, T92–M93, and N119–I121. Residues N123 and N162 are each glycosylated (N-linked (GlcNAc...) asparagine). Residue S170 coordinates substrate. Y183 (proton acceptor) is an active-site residue. Y183 to K187 is an NADP(+) binding site. A glycan (N-linked (GlcNAc...) asparagine) is linked at N207. I218–T222 is a binding site for NADP(+).

The protein belongs to the short-chain dehydrogenases/reductases (SDR) family. As to quaternary structure, homodimer. Post-translationally, glycosylated. In terms of tissue distribution, expressed in the eye.

The protein localises to the endoplasmic reticulum membrane. It is found in the microsome membrane. The catalysed reaction is an 11beta-hydroxysteroid + NADP(+) = an 11-oxosteroid + NADPH + H(+). The enzyme catalyses corticosterone + NADP(+) = 11-dehydrocorticosterone + NADPH + H(+). It carries out the reaction cortisone + NADPH + H(+) = cortisol + NADP(+). It catalyses the reaction a 7beta-hydroxysteroid + NADP(+) = a 7-oxosteroid + NADPH + H(+). The catalysed reaction is 7-oxocholesterol + NADPH + H(+) = 7beta-hydroxycholesterol + NADP(+). The enzyme catalyses chenodeoxycholate + NADP(+) = 7-oxolithocholate + NADPH + H(+). It carries out the reaction 7-oxolithocholate + NADPH + H(+) = ursodeoxycholate + NADP(+). It catalyses the reaction glycochenodeoxycholate + NADP(+) = 7-oxoglycolithocholate + NADPH + H(+). The catalysed reaction is taurochenodeoxycholate + NADP(+) = 7-oxotaurolithocholate + NADPH + H(+). The enzyme catalyses tauroursodeoxycholate + NADP(+) = 7-oxotaurolithocholate + NADPH + H(+). It carries out the reaction glycoursodeoxycholate + NADP(+) = 7-oxoglycolithocholate + NADPH + H(+). It catalyses the reaction 7-oxopregnenolone + NADPH + H(+) = 7beta-hydroxypregnenolone + NADP(+). The catalysed reaction is 3beta,7alpha-dihydroxyandrost-5-en-17-one + NADP(+) = 3beta-hydroxy-5-androstene-7,17-dione + NADPH + H(+). The enzyme catalyses 3beta-hydroxy-5-androstene-7,17-dione + NADPH + H(+) = 3beta,7beta-dihydroxyandrost-5-en-17-one + NADP(+). It carries out the reaction 3beta-hydroxy-5alpha-androstane-7,17-dione + NADPH + H(+) = 3beta,7beta-dihydroxy-5alpha-androstan-17-one + NADP(+). It functions in the pathway steroid metabolism. Functionally, controls the reversible conversion of biologically active glucocorticoids such as cortisone to cortisol, and 11-dehydrocorticosterone to corticosterone in the presence of NADP(H). Participates in the corticosteroid receptor-mediated anti-inflammatory response, as well as metabolic and homeostatic processes. Plays a role in the secretion of aqueous humor in the eye, maintaining a normotensive, intraocular environment. Bidirectional in vitro, predominantly functions as a reductase in vivo, thereby increasing the concentration of active glucocorticoids. It has broad substrate specificity, besides glucocorticoids, it accepts other steroid and sterol substrates. It has broad substrate specificity, besides glucocorticoids, it accepts other steroid and sterol substrates. Interconverts 7-oxo- and 7-hydroxy-neurosteroids such as 7-oxopregnenolone and 7beta-hydroxypregnenolone, 7-oxodehydroepiandrosterone (3beta-hydroxy-5-androstene-7,17-dione) and 7beta-hydroxydehydroepiandrosterone (3beta,7beta-dihydroxyandrost-5-en-17-one), among others. Catalyzes the stereo-specific conversion of the major dietary oxysterol, 7-ketocholesterol (7-oxocholesterol), into the more polar 7-beta-hydroxycholesterol metabolite. 7-oxocholesterol is one of the most important oxysterols, it participates in several events such as induction of apoptosis, accumulation in atherosclerotic lesions, lipid peroxidation, and induction of foam cell formation. Mediates the 7-oxo reduction of 7-oxolithocholate mainly to chenodeoxycholate, and to a lesser extent to ursodeoxycholate, both in its free form and when conjugated to glycine or taurine, providing a link between glucocorticoid activation and bile acid metabolism. Catalyzes the synthesis of 7-beta-25-dihydroxycholesterol from 7-oxo-25-hydroxycholesterol in vitro, which acts as a ligand for the G-protein-coupled receptor (GPCR) Epstein-Barr virus-induced gene 2 (EBI2) and may thereby regulate immune cell migration. This Oryctolagus cuniculus (Rabbit) protein is 11-beta-hydroxysteroid dehydrogenase 1.